A 70-amino-acid polypeptide reads, in one-letter code: MSNKMTGLVKWFNPEKGFGFITPKDGSKDVFVHFSAIQSNDFKTLTENQEVEFGIENGPKGPAAVHVVAL.

The region spanning 7–67 (GLVKWFNPEK…GPKGPAAVHV (61 aa)) is the CSD domain.

The protein localises to the cytoplasm. The protein is Cold shock-like protein CspI (cspI) of Escherichia coli O6:H1 (strain CFT073 / ATCC 700928 / UPEC).